The chain runs to 264 residues: Thymidylate synthase (264 aa).

DUMP is bound at residue R21. H51 contacts (6R)-5,10-methylene-5,6,7,8-tetrahydrofolate. 126-127 (RR) is a dUMP binding site. The active-site Nucleophile is the C146. DUMP-binding positions include 166–169 (RSCD), N177, and 207–209 (HLY). D169 contacts (6R)-5,10-methylene-5,6,7,8-tetrahydrofolate. A263 is a binding site for (6R)-5,10-methylene-5,6,7,8-tetrahydrofolate.

Belongs to the thymidylate synthase family. Bacterial-type ThyA subfamily. Homodimer.

The protein localises to the cytoplasm. The catalysed reaction is dUMP + (6R)-5,10-methylene-5,6,7,8-tetrahydrofolate = 7,8-dihydrofolate + dTMP. It functions in the pathway pyrimidine metabolism; dTTP biosynthesis. In terms of biological role, catalyzes the reductive methylation of 2'-deoxyuridine-5'-monophosphate (dUMP) to 2'-deoxythymidine-5'-monophosphate (dTMP) while utilizing 5,10-methylenetetrahydrofolate (mTHF) as the methyl donor and reductant in the reaction, yielding dihydrofolate (DHF) as a by-product. This enzymatic reaction provides an intracellular de novo source of dTMP, an essential precursor for DNA biosynthesis. This is Thymidylate synthase from Buchnera aphidicola subsp. Baizongia pistaciae (strain Bp).